Reading from the N-terminus, the 142-residue chain is Hemoglobin anodic subunit alpha (142 aa).

N-acetylserine is present on Ser-1. One can recognise a Globin domain in the interval 1–142; the sequence is SLSTKDKAVV…LALALADRYR (142 aa). His-59 is an O2 binding site. His-88 contributes to the heme b binding site.

It belongs to the globin family. As to quaternary structure, heterotetramer of two alpha chains and two beta chains. As to expression, red blood cells.

In terms of biological role, involved in oxygen transport from gills to the various peripheral tissues. The sequence is that of Hemoglobin anodic subunit alpha from Gymnothorax unicolor (Brown moray).